A 571-amino-acid polypeptide reads, in one-letter code: Arginine--tRNA ligase (571 aa).

A 'HIGH' region motif is present at residues 122-132; that stretch reads PNIAKEMHVGH.

The protein belongs to the class-I aminoacyl-tRNA synthetase family. In terms of assembly, monomer.

The protein resides in the cytoplasm. It carries out the reaction tRNA(Arg) + L-arginine + ATP = L-arginyl-tRNA(Arg) + AMP + diphosphate. The chain is Arginine--tRNA ligase from Buchnera aphidicola subsp. Cinara cedri (strain Cc).